The primary structure comprises 182 residues: NADH-quinone oxidoreductase subunit I (182 aa).

4Fe-4S ferredoxin-type domains lie at 52–82 (LTRD…LQKA) and 92–121 (EFFR…LTPD). [4Fe-4S] cluster-binding residues include Cys-62, Cys-65, Cys-68, Cys-72, Cys-101, Cys-104, Cys-107, and Cys-111.

Belongs to the complex I 23 kDa subunit family. NDH-1 is composed of 13 different subunits. Subunits NuoA, H, J, K, L, M, N constitute the membrane sector of the complex. It depends on [4Fe-4S] cluster as a cofactor.

It localises to the cell inner membrane. The enzyme catalyses a quinone + NADH + 5 H(+)(in) = a quinol + NAD(+) + 4 H(+)(out). Its function is as follows. NDH-1 shuttles electrons from NADH, via FMN and iron-sulfur (Fe-S) centers, to quinones in the respiratory chain. The immediate electron acceptor for the enzyme in this species is believed to be ubiquinone. Couples the redox reaction to proton translocation (for every two electrons transferred, four hydrogen ions are translocated across the cytoplasmic membrane), and thus conserves the redox energy in a proton gradient. In Pseudomonas entomophila (strain L48), this protein is NADH-quinone oxidoreductase subunit I.